The primary structure comprises 253 residues: uncharacterized protein (253 aa).

Serine 145 contacts substrate. Residue tyrosine 159 is the Proton acceptor of the active site.

Belongs to the short-chain dehydrogenases/reductases (SDR) family.

This is an uncharacterized protein from Mycobacterium tuberculosis (strain CDC 1551 / Oshkosh).